A 403-amino-acid chain; its full sequence is Imidazolonepropionase (403 aa).

Fe(3+) contacts are provided by His-69 and His-71. Zn(2+)-binding residues include His-69 and His-71. 3 residues coordinate 4-imidazolone-5-propanoate: Arg-78, Tyr-141, and His-174. Tyr-141 contributes to the N-formimidoyl-L-glutamate binding site. His-239 serves as a coordination point for Fe(3+). His-239 serves as a coordination point for Zn(2+). Gln-242 serves as a coordination point for 4-imidazolone-5-propanoate. Asp-314 provides a ligand contact to Fe(3+). Asp-314 is a Zn(2+) binding site. Positions 316 and 318 each coordinate N-formimidoyl-L-glutamate. Ser-319 contacts 4-imidazolone-5-propanoate.

Belongs to the metallo-dependent hydrolases superfamily. HutI family. The cofactor is Zn(2+). It depends on Fe(3+) as a cofactor.

The protein resides in the cytoplasm. It catalyses the reaction 4-imidazolone-5-propanoate + H2O = N-formimidoyl-L-glutamate. It functions in the pathway amino-acid degradation; L-histidine degradation into L-glutamate; N-formimidoyl-L-glutamate from L-histidine: step 3/3. In terms of biological role, catalyzes the hydrolytic cleavage of the carbon-nitrogen bond in imidazolone-5-propanoate to yield N-formimidoyl-L-glutamate. It is the third step in the universal histidine degradation pathway. This Legionella pneumophila (strain Corby) protein is Imidazolonepropionase.